The chain runs to 531 residues: 5-(hydroxymethyl)furfural oxidase (531 aa).

FAD is bound by residues 15–16 (TA), 36–37 (EA), tryptophan 68, leucine 94, glycine 98, 102–105 (NMVV), valine 233, and tryptophan 466. The active-site Proton acceptor is the histidine 467. FAD is bound by residues alanine 501 and 512-513 (TN).

The protein belongs to the GMC oxidoreductase family. Monomer. Requires FAD as cofactor.

It carries out the reaction 5-hydroxymethylfurfural + 3 O2 + 2 H2O = 2,5-dicarboxyfuran + 3 H2O2 + 2 H(+). It catalyses the reaction benzylthiol + O2 = benzothialdehyde + H2O2. Involved in the degradation and detoxification of 5-(hydroxymethyl)furfural (HMF) by mediating its oxidation to furan-2,5-dicarboxylate (FDCA), a biobased platform chemical for the production of polymers. Active with a wide range of aromatic and aliphatic primary alcohols and aldehydes: acts on alcohol groups and requires the spontaneous hydration of aldehyde groups for their oxidation. To a lesser extent, is also able to catalyze the oxidation of thiols that are structurally similar to its alcohol substrates, yielding the corresponding thiocarbonyls. This is 5-(hydroxymethyl)furfural oxidase from Methylovorus sp. (strain MP688).